The chain runs to 1119 residues: Protein translocase subunit SecA (1119 aa).

ATP contacts are provided by residues Q175, 213–217 (GEGKT), and D714. Residues C1106, C1108, C1117, and C1118 each contribute to the Zn(2+) site.

This sequence belongs to the SecA family. In terms of assembly, monomer and homodimer. Part of the essential Sec protein translocation apparatus which comprises SecA, SecYEG and auxiliary proteins SecDF. Other proteins may also be involved. The cofactor is Zn(2+).

The protein localises to the cell inner membrane. The protein resides in the cytoplasm. It catalyses the reaction ATP + H2O + cellular proteinSide 1 = ADP + phosphate + cellular proteinSide 2.. Its function is as follows. Part of the Sec protein translocase complex. Interacts with the SecYEG preprotein conducting channel. Has a central role in coupling the hydrolysis of ATP to the transfer of proteins into and across the cell membrane, serving as an ATP-driven molecular motor driving the stepwise translocation of polypeptide chains across the membrane. This chain is Protein translocase subunit SecA, found in Azobacteroides pseudotrichonymphae genomovar. CFP2.